A 340-amino-acid chain; its full sequence is uncharacterized protein (340 aa).

Helical transmembrane passes span P162 to G182 and F239 to P259.

The protein localises to the cell membrane. This is an uncharacterized protein from Mycobacterium tuberculosis (strain CDC 1551 / Oshkosh).